The sequence spans 203 residues: CS5 fimbrial subunit (203 aa).

The first 22 residues, 1–22, serve as a signal peptide directing secretion; sequence MKKNLLITSVLAMATVSGSVLA.

It is found in the fimbrium. Major subunit of fimbriae. Fimbriae (also called pili), are polar filaments radiating from the surface of the bacterium to a length of 0.5-1.5 micrometers and numbering 100-300 per cell. They enable bacteria to colonize the epithelium of specific host organs. In Escherichia coli, this protein is CS5 fimbrial subunit.